Consider the following 459-residue polypeptide: Septin-4 (459 aa).

Phosphoserine is present on residues serine 10, serine 49, serine 98, and serine 99. 2 disordered regions span residues 18–52 (FVKDFPGSEPCHPTESKTRVARPQILEPRPQSPDL) and 70–98 (SQQYFCPPAPLSPSSRPRSPWGKLDPYDS). In terms of domain architecture, Septin-type G spans 122–395 (KGFDFTLMVA…ENYRAQCIQS (274 aa)). Positions 132–139 (GESGLGKS) are G1 motif. GTP contacts are provided by residues 132–139 (GESGLGKS) and threonine 166. The G3 motif stretch occupies residues 189–192 (DTPG). Residues 270–273 (AKAD) form a G4 motif region. 271–279 (KADTLTPSE) provides a ligand contact to GTP. Serine 306 carries the phosphoserine modification. Residues glycine 329 and arginine 344 each contribute to the GTP site. The interval 410 to 430 (TRESGTDFPIPAVPPGTDPET) is disordered. The residue at position 413 (serine 413) is a Phosphoserine. Threonine 415 carries the post-translational modification Phosphothreonine. The stretch at 434-459 (IREKDEELRRMQEMLHKIQRQMKETH) forms a coiled coil.

It belongs to the TRAFAC class TrmE-Era-EngA-EngB-Septin-like GTPase superfamily. Septin GTPase family. In terms of assembly, septins polymerize into heterooligomeric protein complexes that form filaments, and can associate with cellular membranes, actin filaments and microtubules. GTPase activity is required for filament formation. Interacts with SEPTIN8. Component of a septin core octameric complex consisting of SEPTIN12, SEPTIN7, SEPTIN6 and SEPTIN2 or SEPTIN4 in the order 12-7-6-2-2-6-7-12 or 12-7-6-4-4-6-7-12. Interacts with SEPTIN14 (via C-terminus). Interacts with DYRK1A. Interacts with SLC6A3/DAT and SNCA/alpha-synuclein. Interacts with STX1A; in the striatum. Interacts with XIAP (via BIR3 domain) following the induction of apoptosis. Interacts with AREL1 (via HECT domain); in the cytoplasm following induction of apoptosis. Phosphorylated by DYRK1A.

It localises to the cytoplasm. The protein localises to the cell projection. Its subcellular location is the cilium. The protein resides in the flagellum. It is found in the cytoplasmic vesicle. It localises to the secretory vesicle. The protein localises to the axon. Its subcellular location is the dendrite. The protein resides in the perikaryon. Its function is as follows. Filament-forming cytoskeletal GTPase. Pro-apoptotic protein involved in LGR5-positive intestinal stem cell and Paneth cell expansion in the intestines, via its interaction with XIAP. May also play a role in the regulation of cell fate in the intestine. Positive regulator of apoptosis involved in hematopoietic stem cell homeostasis; via its interaction with XIAP. Negative regulator of repair and hair follicle regeneration in response to injury, due to inhibition of hair follicle stem cell proliferation, potentially via its interaction with XIAP. Plays an important role in male fertility and sperm motility. During spermiogenesis, essential for the establishment of the annulus (a fibrous ring structure connecting the midpiece and the principal piece of the sperm flagellum) which is a requisite for the structural and mechanical integrity of the sperm. Involved in the migration of cortical neurons and the formation of neuron leading processes during embryonic development. Required for dopaminergic metabolism in presynaptic autoreceptors; potentially via activity as a presynaptic scaffold protein. This Rattus norvegicus (Rat) protein is Septin-4.